The sequence spans 312 residues: 1-phosphofructokinase (312 aa).

Residues 223–228 and 254–255 each bind ATP; these read SLGAEG and GD. Residue aspartate 255 is the Proton acceptor of the active site.

It belongs to the carbohydrate kinase PfkB family.

It catalyses the reaction beta-D-fructose 1-phosphate + ATP = beta-D-fructose 1,6-bisphosphate + ADP + H(+). Functionally, catalyzes the ATP-dependent phosphorylation of fructose-l-phosphate to fructose-l,6-bisphosphate. The polypeptide is 1-phosphofructokinase (fruK) (Escherichia coli O157:H7).